Here is a 993-residue protein sequence, read N- to C-terminus: General transcription factor II-I repeat domain-containing protein 1 (993 aa).

GTF2I-like repeat units lie at residues 117-211 (LGPT…EPKS) and 332-426 (LRET…DGTT). A disordered region spans residues 461 to 480 (GSRSEKSSISDECEPGTSSE). GTF2I-like repeat units lie at residues 597–691 (DGIG…LEDC), 727–821 (LSRI…RPDD), and 824–918 (ANRL…ICSE). The tract at residues 916-961 (CSEPPKIKNGNTGPKRKRKRVSEGNSISSASSNCSSSSSSSSNMDP) is disordered. Positions 929–936 (PKRKRKRV) match the Nuclear localization signal motif. Residues 938–961 (EGNSISSASSNCSSSSSSSSNMDP) are compositionally biased toward low complexity.

The protein belongs to the TFII-I family. In terms of assembly, interacts (via repeats 4-5) with foxh1/fast1 (via Fork-head domain). Interacts with smad2 and smad3 (via MH1 domain) in a ligand (activin)-dependent manner. Interacts with pou5f1.1/oct-25 to form a repression complex on the promoters of the gsc and mix2 genes. As to expression, uniformly expressed in the embryo in pre- and early gastrula stages. Enriched in the head region of early neurula through tailbud stages.

Its subcellular location is the nucleus. Its function is as follows. Transcription factor that activates a subset of organizer-specific genes. Binds to the distal element (DE) of the gsc promoter to regulate its expression. In the presence of pou5f1.1/oct-25, forms a repression complex on the promoter of the gsc and mix2 genes to inhibit their transcription. The protein is General transcription factor II-I repeat domain-containing protein 1 (gtf2ird1) of Xenopus laevis (African clawed frog).